A 376-amino-acid polypeptide reads, in one-letter code: Cytochrome b (376 aa).

4 helical membrane-spanning segments follow: residues 28–48, 72–94, 107–127, and 169–189; these read YGFL…FLAS, WCFR…LHIL, SWIS…VGYV, and FFVL…IHIF. Heme b-binding residues include H78 and H92. Heme b contacts are provided by H173 and H187. H192 contacts a ubiquinone. The next 4 membrane-spanning stretches (helical) occupy residues 214–234, 274–294, 317–337, and 340–360; these read LLSL…IQSL, VPSK…LFLL, VPII…CQLP, and IFIL…LFVL.

Belongs to the cytochrome b family. In terms of assembly, the main subunits of complex b-c1 are: cytochrome b, cytochrome c1 and the Rieske protein. Heme b is required as a cofactor.

The protein localises to the mitochondrion inner membrane. Component of the ubiquinol-cytochrome c reductase complex (complex III or cytochrome b-c1 complex) that is part of the mitochondrial respiratory chain. The b-c1 complex mediates electron transfer from ubiquinol to cytochrome c. Contributes to the generation of a proton gradient across the mitochondrial membrane that is then used for ATP synthesis. The sequence is that of Cytochrome b (MT-CYB) from Plasmodium falciparum.